Consider the following 512-residue polypeptide: FAD-dependent monooxygenase prx3 (512 aa).

The signal sequence occupies residues 1–19; it reads MLSLKAFLALSLSIHLSQG. The FAD-binding PCMH-type domain occupies 63–235; it reads CQTTPTCVFA…TRFDLATFSV (173 aa). His100 is modified (pros-8alpha-FAD histidine). 6 N-linked (GlcNAc...) asparagine glycosylation sites follow: Asn197, Asn281, Asn307, Asn329, Asn361, and Asn477.

The protein belongs to the oxygen-dependent FAD-linked oxidoreductase family.

It participates in sesquiterpene biosynthesis. FAD-dependent monooxygenase; part of the gene cluster that mediates the biosynthesis of PR-toxin, a bicyclic sesquiterpene belonging to the eremophilane class and acting as a mycotoxin. The first step of the pathway is catalyzed by the aristolochene synthase which performs the cyclization of trans,trans-farnesyl diphosphate (FPP) to the bicyclic sesquiterpene aristolochene. Following the formation of aristolochene, the non-oxygenated aristolochene is converted to the trioxygenated intermediate eremofortin B, via 7-epi-neopetasone. This conversion appears to involve three enzymes, a hydroxysterol oxidase-like enzyme, the quinone-oxidase prx3 that forms the quinone-type-structure in the bicyclic nucleus of aristolochene with the C8-oxo group and the C-3 hydroxyl group, and the P450 monooxygenase ORF6 that introduces the epoxide at the double bond between carbons 1 and 2. No monoxy or dioxy-intermediates have been reported to be released to the broth, so these three early oxidative reactions may be coupled together. Eremofortin B is further oxidized by another P450 monooxygenase, that introduces a second epoxide between carbons 7 and 11 prior to acetylation to eremofortin A by the acetyltransferase ORF8. The second epoxidation may be performed by a second P450 monooxygenase. After the acetylation step, eremofortin A is converted to eremofortin C and then to PR-toxin. First the conversion of eremofortin A to eremofortin C proceeds by oxidation of the side chain of the molecule at C-12 and is catalyzed by the short-chain oxidoreductase prx1. The cytochrome P450 monooxygenase ORF6 is probably also involved in this step. The primary alcohol formed at C-12 is finally oxidized by the short-chain alcohol dehydrogenase prx4 that forms PR-toxin. In Penicillium roqueforti (strain FM164), this protein is FAD-dependent monooxygenase prx3.